Here is a 179-residue protein sequence, read N- to C-terminus: ATP-dependent protease subunit HslV (179 aa).

Residue Thr-7 is part of the active site. The Na(+) site is built by Gly-162, Cys-165, and Thr-168.

It belongs to the peptidase T1B family. HslV subfamily. As to quaternary structure, a double ring-shaped homohexamer of HslV is capped on each side by a ring-shaped HslU homohexamer. The assembly of the HslU/HslV complex is dependent on binding of ATP.

It is found in the cytoplasm. It carries out the reaction ATP-dependent cleavage of peptide bonds with broad specificity.. Allosterically activated by HslU binding. Its function is as follows. Protease subunit of a proteasome-like degradation complex believed to be a general protein degrading machinery. In Teredinibacter turnerae (strain ATCC 39867 / T7901), this protein is ATP-dependent protease subunit HslV.